The sequence spans 153 residues: Pheromone-binding protein Gp-9 (153 aa).

Residues 1 to 19 (MKTFVLHIFIFALVAFASA) form the signal peptide. 3 disulfide bridges follow: Cys-37/Cys-77, Cys-73/Cys-129, and Cys-118/Cys-138.

This sequence belongs to the PBP/GOBP family. As to quaternary structure, homodimer.

The protein localises to the secreted. Functionally, colony queen number, a major feature of social organization, is associated with worker genotype for Gp-9. Colonies are headed by either a single reproductive queen (monogyne form) or multiple queens (polygyne form). Differences in worker Gp-9 genotypes between social forms may cause differences in workers' abilities to recognize queens and regulate their numbers. The sequence is that of Pheromone-binding protein Gp-9 from Solenopsis daguerrei (Workerless parasitic ant).